We begin with the raw amino-acid sequence, 180 residues long: Capsid assembly scaffolding protein (180 aa).

Belongs to the SPP1-like scaffolding protein family. In terms of assembly, homodimer.

Scaffolding protein involved in the icosahedric procapsid assembly. Coassembles with the capsid proteins to form the procapsid, in which the scaffolding protein is found within the external shell of icosahedrally arranged capsid protein subunits. In a subsequent step the scaffolding protein molecules are released from the procapsid. This is Capsid assembly scaffolding protein (g20) from Lactococcus phage mv4 (Lactococcus delbrueckii bacteriophage mv4).